The chain runs to 150 residues: Large ribosomal subunit protein uL15 (150 aa).

Residues 1 to 60 (MKLSDLRPNPGANKRRKRVGRGPGSGHGKTATRGHKGQKSRSGGLKDPRRFEGGRSTTLM) form a disordered region. Residues 30 to 39 (TATRGHKGQK) are compositionally biased toward basic residues. Residues 44 to 53 (GLKDPRRFEG) show a composition bias toward basic and acidic residues.

This sequence belongs to the universal ribosomal protein uL15 family. In terms of assembly, part of the 50S ribosomal subunit.

Its function is as follows. Binds to the 23S rRNA. This chain is Large ribosomal subunit protein uL15, found in Thermus thermophilus (strain ATCC BAA-163 / DSM 7039 / HB27).